Reading from the N-terminus, the 516-residue chain is Cytochrome P450 monooxygenase otaC (516 aa).

A helical membrane pass occupies residues 13 to 30 (FLWTAFAVGVVYCCTRMV). Cys-454 is a binding site for heme.

The protein belongs to the cytochrome P450 family. It depends on heme as a cofactor.

It is found in the membrane. The catalysed reaction is 7-methylmellein + 3 reduced [NADPH--hemoprotein reductase] + 3 O2 = 7-carboxymellein + 3 oxidized [NADPH--hemoprotein reductase] + 4 H2O + 4 H(+). It participates in mycotoxin biosynthesis. Functionally, cytochrome P450 monooxygenase; part of the gene cluster that mediates the biosynthesis of ochratoxin A (OTA), a mycotoxin composed of a chlorinated type I polyketide dihydroisocoumarin moiety linked to L-phenylalanine, and demonstrated to have nephrotoxic, immunotoxic, genotoxic, neurotoxic, and teratogenic properties. OtaC catalyzes the oxidation of 7-methylmellein (7-MM) into 7-carboxymellein. The pathway begins with the highly reducing polyketide synthase otaA that catalyzes the formation of the isocoumarin group during the initial stages of biosynthesis, starting from one acetate and 4 malonate units, to originate the characteristic pentaketide skeleton 7-methylmellein (7-MM) of the OTA molecule. The newly identified cyclase otaY might be involved in the polyketide cyclization reaction during the initial steps of the OTA biosynthesis. 7-MM is then oxidized into 7-carboxymellein (also called ochratoxin beta) by the cytochrome P450 monooxygenase otaC. The NRPS encoded by the otaB gene is involved in the linking of phenylalanine to the dihydroisocoumarin ring. The reaction catalyzed by NRPS results in the production of ochratoxin B (OTB), which is the non-chlorinated analog of OTA and which subsequently serves as the substrate of the halogenase otaD for chlorination activity to form the final molecular structure of OTA, containing a chlorine atom in the C-5 position of the molecule. This chain is Cytochrome P450 monooxygenase otaC, found in Aspergillus carbonarius (strain ITEM 5010).